The following is a 516-amino-acid chain: Methionine--tRNA ligase (516 aa).

A 'HIGH' region motif is present at residues 14-24 (SYPNGKPHIGH). The short motif at 302 to 306 (KMSKS) is the 'KMSKS' region element. Lys-305 lines the ATP pocket.

The protein belongs to the class-I aminoacyl-tRNA synthetase family. MetG type 2B subfamily. In terms of assembly, monomer.

The protein resides in the cytoplasm. It carries out the reaction tRNA(Met) + L-methionine + ATP = L-methionyl-tRNA(Met) + AMP + diphosphate. Functionally, is required not only for elongation of protein synthesis but also for the initiation of all mRNA translation through initiator tRNA(fMet) aminoacylation. The polypeptide is Methionine--tRNA ligase (Rhizobium meliloti (strain 1021) (Ensifer meliloti)).